A 161-amino-acid chain; its full sequence is S-ribosylhomocysteine lyase (161 aa).

The Fe cation site is built by H58, H62, and C128.

It belongs to the LuxS family. In terms of assembly, homodimer. Fe cation serves as cofactor.

The enzyme catalyses S-(5-deoxy-D-ribos-5-yl)-L-homocysteine = (S)-4,5-dihydroxypentane-2,3-dione + L-homocysteine. Functionally, involved in the synthesis of autoinducer 2 (AI-2) which is secreted by bacteria and is used to communicate both the cell density and the metabolic potential of the environment. The regulation of gene expression in response to changes in cell density is called quorum sensing. Catalyzes the transformation of S-ribosylhomocysteine (RHC) to homocysteine (HC) and 4,5-dihydroxy-2,3-pentadione (DPD). The protein is S-ribosylhomocysteine lyase of Bifidobacterium adolescentis (strain ATCC 15703 / DSM 20083 / NCTC 11814 / E194a).